The chain runs to 262 residues: Tryptophan synthase alpha chain (262 aa).

Catalysis depends on proton acceptor residues Glu-52 and Asp-63.

The protein belongs to the TrpA family. As to quaternary structure, tetramer of two alpha and two beta chains.

It carries out the reaction (1S,2R)-1-C-(indol-3-yl)glycerol 3-phosphate + L-serine = D-glyceraldehyde 3-phosphate + L-tryptophan + H2O. Its pathway is amino-acid biosynthesis; L-tryptophan biosynthesis; L-tryptophan from chorismate: step 5/5. Functionally, the alpha subunit is responsible for the aldol cleavage of indoleglycerol phosphate to indole and glyceraldehyde 3-phosphate. The protein is Tryptophan synthase alpha chain of Mycobacteroides abscessus (strain ATCC 19977 / DSM 44196 / CCUG 20993 / CIP 104536 / JCM 13569 / NCTC 13031 / TMC 1543 / L948) (Mycobacterium abscessus).